The sequence spans 204 residues: DNA-binding transcriptional activator EvgA (204 aa).

The Response regulatory domain occupies 2–117 (NAIIIDDHPL…NIIAAIEAAK (116 aa)). A 4-aspartylphosphate modification is found at Asp-52. Positions 137-202 (DQQKLDSLSK…DLYTFAQRNK (66 aa)) constitute an HTH luxR-type domain. Residues 161–180 (NNDIAEKMFISNKTVSTYKS) constitute a DNA-binding region (H-T-H motif).

In terms of assembly, homodimer. In terms of processing, phosphorylated by EvgS.

Its subcellular location is the cytoplasm. Its function is as follows. Member of the two-component regulatory system EvgS/EvgA. Regulates the expression of emrKY operon and yfdX. Also seems to control expression of at least one other multidrug efflux operon. The chain is DNA-binding transcriptional activator EvgA (evgA) from Escherichia coli O157:H7.